A 280-amino-acid polypeptide reads, in one-letter code: Probable endonuclease 4 (280 aa).

Zn(2+) contacts are provided by His77, His117, Glu148, Asp180, His183, His215, Asp228, His230, and Glu259.

This sequence belongs to the AP endonuclease 2 family. Zn(2+) is required as a cofactor.

The catalysed reaction is Endonucleolytic cleavage to 5'-phosphooligonucleotide end-products.. In terms of biological role, endonuclease IV plays a role in DNA repair. It cleaves phosphodiester bonds at apurinic or apyrimidinic (AP) sites, generating a 3'-hydroxyl group and a 5'-terminal sugar phosphate. This is Probable endonuclease 4 from Thermoplasma volcanium (strain ATCC 51530 / DSM 4299 / JCM 9571 / NBRC 15438 / GSS1).